The chain runs to 77 residues: U8-lycotoxin-Ls1n (77 aa).

A signal peptide spans methionine 1–alanine 20. A propeptide spanning residues glutamine 21 to lysine 26 is cleaved from the precursor.

This sequence belongs to the neurotoxin 19 (CSTX) family. 08 (U8-Lctx) subfamily. Contains 4 disulfide bonds. As to expression, expressed by the venom gland.

The protein localises to the secreted. This Lycosa singoriensis (Wolf spider) protein is U8-lycotoxin-Ls1n.